The primary structure comprises 378 residues: Probable endopolygalacturonase E (378 aa).

The signal sequence occupies residues M1–A19. Positions S20–K38 are excised as a propeptide. An intrachain disulfide couples C43 to C61. PbH1 repeat units lie at residues G103–G125, S174–D204, and S205–S226. The Proton donor role is filled by D219. A disulfide bond links C221 and C237. H241 is a catalytic residue. PbH1 repeat units lie at residues V256 to T277, V285 to Q307, and T317 to C345. A glycan (N-linked (GlcNAc...) asparagine) is linked at N258. 2 cysteine pairs are disulfide-bonded: C345–C350 and C369–C378.

Belongs to the glycosyl hydrolase 28 family.

It is found in the secreted. It catalyses the reaction (1,4-alpha-D-galacturonosyl)n+m + H2O = (1,4-alpha-D-galacturonosyl)n + (1,4-alpha-D-galacturonosyl)m.. Functionally, involved in maceration and soft-rotting of plant tissue. Hydrolyzes the 1,4-alpha glycosidic bonds of de-esterified pectate in the smooth region of the plant cell wall. This chain is Probable endopolygalacturonase E (pgaE), found in Aspergillus niger (strain ATCC MYA-4892 / CBS 513.88 / FGSC A1513).